A 490-amino-acid chain; its full sequence is GTPase Der (490 aa).

2 consecutive EngA-type G domains span residues 1 to 165 (MRIA…QIPV) and 227 to 400 (LKVA…TIAT). GTP contacts are provided by residues 7-14 (GRPNVGKS), 54-58 (DTGGV), 117-120 (NKAD), 233-240 (GHPNVGKS), 280-284 (DTAGL), and 345-348 (NKWD). Residues 401–485 (TKLSTSLVNK…PFDLEYKAKP (85 aa)) form the KH-like domain.

The protein belongs to the TRAFAC class TrmE-Era-EngA-EngB-Septin-like GTPase superfamily. EngA (Der) GTPase family. As to quaternary structure, associates with the 50S ribosomal subunit.

Functionally, GTPase that plays an essential role in the late steps of ribosome biogenesis. The protein is GTPase Der of Chlamydia trachomatis serovar L2b (strain UCH-1/proctitis).